Consider the following 149-residue polypeptide: Putative pre-16S rRNA nuclease (149 aa).

It belongs to the YqgF nuclease family.

The protein resides in the cytoplasm. Its function is as follows. Could be a nuclease involved in processing of the 5'-end of pre-16S rRNA. The sequence is that of Putative pre-16S rRNA nuclease from Synechococcus elongatus (strain ATCC 33912 / PCC 7942 / FACHB-805) (Anacystis nidulans R2).